Consider the following 206-residue polypeptide: Glutathione S-transferase 1 (206 aa).

Residues 2-79 (PQYKLTYFDI…YLGRQFGLAG (78 aa)) enclose the GST N-terminal domain. Glutathione contacts are provided by residues Y8, W39, K43, 49 to 51 (GQL), and 63 to 64 (QS). Residues 81-206 (TPMEEAQVDS…WIAERPKTPY (126 aa)) form the GST C-terminal domain.

The protein belongs to the GST superfamily. Sigma family.

It catalyses the reaction RX + glutathione = an S-substituted glutathione + a halide anion + H(+). In terms of biological role, conjugation of reduced glutathione to a wide number of exogenous and endogenous hydrophobic electrophiles. Can also function as a GSH peroxidase. The chain is Glutathione S-transferase 1 (GST1) from Ascaris suum (Pig roundworm).